The primary structure comprises 482 residues: Pup--protein ligase (482 aa).

Glu-16 lines the Mg(2+) pocket. Arg-60 serves as a coordination point for ATP. Tyr-62 contributes to the Mg(2+) binding site. Asp-64 acts as the Proton acceptor in catalysis. Glu-70 provides a ligand contact to Mg(2+). Residues Thr-73 and Trp-440 each coordinate ATP.

Belongs to the Pup ligase/Pup deamidase family. Pup-conjugating enzyme subfamily.

The enzyme catalyses ATP + [prokaryotic ubiquitin-like protein]-L-glutamate + [protein]-L-lysine = ADP + phosphate + N(6)-([prokaryotic ubiquitin-like protein]-gamma-L-glutamyl)-[protein]-L-lysine.. Its pathway is protein degradation; proteasomal Pup-dependent pathway. It participates in protein modification; protein pupylation. In terms of biological role, catalyzes the covalent attachment of the prokaryotic ubiquitin-like protein modifier Pup to the proteasomal substrate proteins, thereby targeting them for proteasomal degradation. This tagging system is termed pupylation. The ligation reaction involves the side-chain carboxylate of the C-terminal glutamate of Pup and the side-chain amino group of a substrate lysine. The chain is Pup--protein ligase from Corynebacterium glutamicum (strain R).